Here is a 307-residue protein sequence, read N- to C-terminus: Farnesol kinase, chloroplastic (307 aa).

Residues 1–65 constitute a chloroplast transit peptide; sequence MATTSTTTKL…TKIRKSSLAA (65 aa). Helical transmembrane passes span 77–97, 116–136, 137–157, 177–194, 197–217, 237–257, and 265–285; these read VCAF…WGEI, IGLV…GALF, ASLV…GVYH, GPLY…YYWK, PIAI…DIVG, IGMA…FASF, and GMIL…SLPI.

This sequence belongs to the polyprenol kinase family.

Its subcellular location is the plastid. The protein resides in the chloroplast membrane. It carries out the reaction (2E,6E)-farnesol + CTP = (2E,6E)-farnesyl phosphate + CDP + H(+). The catalysed reaction is (2E,6E)-farnesol + ATP = (2E,6E)-farnesyl phosphate + ADP + H(+). The enzyme catalyses (2E)-geraniol + ATP = (2E)-geranyl phosphate + ADP + H(+). It catalyses the reaction (2E,6E,10E)-geranylgeraniol + ATP = (2E,6E,10E)-geranylgeranyl phosphate + ADP + H(+). Kinase involved in negative regulation of abscisic acid (ABA) signaling. Substrate preference is farnesol &gt; geraniol &gt; geranylgeraniol, but has no activity with farnesyl phosphate. Can use CTP &gt; ATP &gt; GTP = UTP as phosphoryl donor. In Arabidopsis thaliana (Mouse-ear cress), this protein is Farnesol kinase, chloroplastic.